Reading from the N-terminus, the 338-residue chain is Legumin B (338 aa).

The disordered stretch occupies residues 16 to 162 (SLNTKEDTAK…RQHSKGRKNG (147 aa)). Residues 18-44 (NTKEDTAKRLRSPQDERGQIVKVEDGL) show a composition bias toward basic and acidic residues. Composition is skewed to acidic residues over residues 82-92 (DEDEDEEEEEE) and 136-150 (EEEEELEKEEEEEEE). The region spanning 174-321 (ENIARPSRGD…AFGLRHSQVA (148 aa)) is the Cupin type-1 domain.

It belongs to the 11S seed storage protein (globulins) family. In terms of assembly, hexamer; each subunit is composed of an acidic and a basic chain derived from a single precursor and linked by a disulfide bond.

Functionally, this protein found in the seeds of many leguminous and non-leguminous plants is the source of sulfur-containing amino acids in seed meals. This is Legumin B (LEGB) from Pisum sativum (Garden pea).